We begin with the raw amino-acid sequence, 32 residues long: uncharacterized protein (32 aa).

Residues 3 to 23 (IGIIFPVVIFITAVVFLAWFF) traverse the membrane as a helical segment.

It localises to the cell inner membrane. This is an uncharacterized protein from Escherichia coli (strain K12).